A 178-amino-acid chain; its full sequence is Protein GrpE (178 aa).

Residues 1 to 11 (MADELSEKSVE) are compositionally biased toward basic and acidic residues. The disordered stretch occupies residues 1–32 (MADELSEKSVEGTEEDGESAPAEGTTEGVPVD).

This sequence belongs to the GrpE family. As to quaternary structure, homodimer.

It localises to the cytoplasm. Participates actively in the response to hyperosmotic and heat shock by preventing the aggregation of stress-denatured proteins, in association with DnaK and GrpE. It is the nucleotide exchange factor for DnaK and may function as a thermosensor. Unfolded proteins bind initially to DnaJ; upon interaction with the DnaJ-bound protein, DnaK hydrolyzes its bound ATP, resulting in the formation of a stable complex. GrpE releases ADP from DnaK; ATP binding to DnaK triggers the release of the substrate protein, thus completing the reaction cycle. Several rounds of ATP-dependent interactions between DnaJ, DnaK and GrpE are required for fully efficient folding. The sequence is that of Protein GrpE from Methanothrix thermoacetophila (strain DSM 6194 / JCM 14653 / NBRC 101360 / PT) (Methanosaeta thermophila).